Here is a 565-residue protein sequence, read N- to C-terminus: 2-isopropylmalate synthase (565 aa).

Positions 37-312 constitute a Pyruvate carboxyltransferase domain; sequence PRWCSVDLRD…DPMIDLSDID (276 aa). Residues Asp-46, His-251, His-253, and Asn-287 each coordinate Mg(2+). The segment at 446–565 is regulatory domain; it reads EGGDPAASLE…SAVNRASRES (120 aa).

Belongs to the alpha-IPM synthase/homocitrate synthase family. LeuA type 2 subfamily. Homodimer. Mg(2+) is required as a cofactor.

The protein resides in the cytoplasm. It catalyses the reaction 3-methyl-2-oxobutanoate + acetyl-CoA + H2O = (2S)-2-isopropylmalate + CoA + H(+). The protein operates within amino-acid biosynthesis; L-leucine biosynthesis; L-leucine from 3-methyl-2-oxobutanoate: step 1/4. Functionally, catalyzes the condensation of the acetyl group of acetyl-CoA with 3-methyl-2-oxobutanoate (2-ketoisovalerate) to form 3-carboxy-3-hydroxy-4-methylpentanoate (2-isopropylmalate). The chain is 2-isopropylmalate synthase from Parafrankia sp. (strain EAN1pec).